The sequence spans 650 residues: Putative pumilio homolog 7, chloroplastic (650 aa).

Disordered regions lie at residues 1–22 (MDEF…RTPL) and 200–235 (NDDK…GQEI). The N-terminal 77 residues, 1–77 (MDEFREASSV…SPPFNGIIPK (77 aa)), are a transit peptide targeting the chloroplast. 2 stretches are compositionally biased toward low complexity: residues 8–22 (SSVS…RTPL) and 217–232 (PSYS…YNNG). The PUM-HD domain maps to 308–650 (SNTRALMSNN…RIFSRNLLKK (343 aa)). Pumilio repeat units lie at residues 333–368 (DIQG…IIFN), 369–404 (EVIA…QIVL), 408–443 (EEPG…SLVK), 445–480 (ALRP…FIFD), 481–516 (AATK…KLIA), 517–552 (EISR…MMLA), 553–591 (QLKG…ELVS), and 594–625 (HFDQ…SLVE).

The protein localises to the plastid. The protein resides in the chloroplast. Its subcellular location is the cytoplasm. Its function is as follows. Sequence-specific RNA-binding protein that regulates translation and mRNA stability by binding the 3'-UTR of target mRNAs. The chain is Putative pumilio homolog 7, chloroplastic (APUM7) from Arabidopsis thaliana (Mouse-ear cress).